Reading from the N-terminus, the 396-residue chain is Elongation factor Tu (396 aa).

The 196-residue stretch at 10–205 folds into the tr-type G domain; it reads KPHVNIGTIG…AVDESIPDPV (196 aa). The interval 19 to 26 is G1; sequence GHVDHGKT. Residue 19–26 participates in GTP binding; that stretch reads GHVDHGKT. Mg(2+) is bound at residue Thr-26. Residues 62–66 are G2; the sequence is GITIN. The segment at 83–86 is G3; that stretch reads DAPG. GTP-binding positions include 83–87 and 138–141; these read DAPGH and NKAD. The tract at residues 138-141 is G4; the sequence is NKAD. The segment at 175–177 is G5; that stretch reads SAL.

The protein belongs to the TRAFAC class translation factor GTPase superfamily. Classic translation factor GTPase family. EF-Tu/EF-1A subfamily. In terms of assembly, monomer.

It is found in the cytoplasm. It catalyses the reaction GTP + H2O = GDP + phosphate + H(+). GTP hydrolase that promotes the GTP-dependent binding of aminoacyl-tRNA to the A-site of ribosomes during protein biosynthesis. In Rhodococcus jostii (strain RHA1), this protein is Elongation factor Tu.